A 301-amino-acid chain; its full sequence is Ribosomal RNA small subunit methyltransferase H (301 aa).

Residues 35–37 (GGH), Asp-55, Phe-84, Asp-105, and Gln-112 contribute to the S-adenosyl-L-methionine site.

This sequence belongs to the methyltransferase superfamily. RsmH family.

The protein resides in the cytoplasm. It catalyses the reaction cytidine(1402) in 16S rRNA + S-adenosyl-L-methionine = N(4)-methylcytidine(1402) in 16S rRNA + S-adenosyl-L-homocysteine + H(+). Its function is as follows. Specifically methylates the N4 position of cytidine in position 1402 (C1402) of 16S rRNA. The protein is Ribosomal RNA small subunit methyltransferase H of Chloroflexus aggregans (strain MD-66 / DSM 9485).